A 1122-amino-acid chain; its full sequence is Protein phosphatase 1 regulatory subunit 3A (1122 aa).

Residues 32–58 are disordered; the sequence is TFQPGFSPQPSRRGSDSSEDIYLDTPS. Phosphoserine; by GSK3 is present on residues Ser38 and Ser42. Ser46 bears the Phosphoserine; by PKA and ISPK mark. A Phosphoserine modification is found at Ser49. Residue Thr56 is modified to Phosphothreonine. Residues 62–65 carry the PP1-binding motif motif; sequence RRVS. Ser65 is subject to Phosphoserine; by PKA. The region spanning 122-230 is the CBM21 domain; that stretch reads QLQIQKAILE…NNNGTNYTFI (109 aa). Disordered regions lie at residues 332-351, 395-422, 496-516, and 640-668; these read STAS…NFPN, SSGD…LGDT, CLKE…NGKD, and GINS…SREN. 2 stretches are compositionally biased toward basic and acidic residues: residues 395–405 and 499–516; these read SSGDDCTHQPS and ESTE…NGKD. Residues 640–662 show a composition bias toward polar residues; sequence GINSEDQDNSPQHKQSWNVLESQ. Ser844 carries the post-translational modification Phosphoserine. A compositionally biased stretch (basic and acidic residues) spans 963–977; the sequence is IEKHPYPESKPEEVS. Disordered stretches follow at residues 963 to 983 and 1025 to 1058; these read IEKH…SGIV and RHEN…PVEE. Composition is skewed to polar residues over residues 1031–1040 and 1048–1058; these read LVSSGQSLYT and SSASTSLPVEE. The chain crosses the membrane as a helical span at residues 1078 to 1098; sequence YFLLFLIFLITVYHYDLMIGL.

As to quaternary structure, interacts with PPP1CC catalytic subunit of PP1, and associates with glycogen. In terms of processing, phosphorylation at Ser-46 by ISPK stimulates the dephosphorylation of glycogen synthase and phosphorylase kinase. Skeletal muscle and heart.

The protein resides in the membrane. Seems to act as a glycogen-targeting subunit for PP1. PP1 is essential for cell division, and participates in the regulation of glycogen metabolism, muscle contractility and protein synthesis. Plays an important role in glycogen synthesis but is not essential for insulin activation of glycogen synthase. This chain is Protein phosphatase 1 regulatory subunit 3A (PPP1R3A), found in Homo sapiens (Human).